The chain runs to 212 residues: MHTKVYVSEDRTKVFVLFYEAACVFSNFYPSGFEAKPVENFLKDTEKKEKLLKFTCSEQYFMYNKALLVGDMDIAEQILKETNPMKMKLLGRKLSMTKEQLKLWSQKSKDVMYRACLEKFSQNEDCRMILFRTHGMKLVEASPTDKIWGIGLDKADQRCEDERNWRGSNWLGEVLDQVREELWTRQEFKSNREQILKESLETRCQILEHFSH.

Expressed in the intestine.

In terms of biological role, plays a role in innate immunity by conferring resistance to virulent strains of the Gram-negative bacterium P.aeruginosa via the zip-2 pathway. Can act independently of several immunity-related pathways including pmk-1 p38MAPK, dbl-1 TGF-beta, kgb-1 JNK and bar-1/beta-catenin pathways. This is Protein irg-1 from Caenorhabditis elegans.